Reading from the N-terminus, the 889-residue chain is MRTMWWPCLVLALLSGLETSGFPRSPLQLLGKRSLPEGVVDGIEVYSTKISCKVTSRFAHNVVTTRAVNRADTAKEVSFDVELPKTAFITNFTLTIDGVTYPGNVKEKEVAQKQYEKAVSQGKTAGLVKASGRKLEKFTVSVNVAAGSKVTFELTYEELLKRNKGKYEMYLKVQPKQLVRHFEIDAHIFEPQGISMLDAEASFITNDLLGSALTKSFSGKKGHVSFKPSLDQQRSCPTCTDSLLNGDFTIVYDVNRESPGNVQIVNGYFVHFFAPQGLPVVPKNIVFVIDVSGSMSGRKIQQTREALLKILDDVKEDDYLNFILFSTDVTTWKDHLVQATPANLKEAKTFVKNIHDQSMTNINDGLLKGIEMLNKAREDHTVPERSTSIIIMLTDGDANTGESRPEKIQENVRNAIGGKFPLYNLGFGNNLNYNFLETLALENHGLARRIYEDSDANLQLQGFYEEVANPLLTNVEVEYPENAILDLTRNSYPHFYDGSEIVVAGRLVDRNMDNFKADVKGHGALNDLTFTEEVDMEEMDAALKEQGYIFGDYIERLWAYLTIEQLLEKRKNAKGDEKENITAEALDLSLKYHFVTPLTSMVVTKPEDNEDQTSIADKPGEEAIAETTTMSFLTTQQSSQSPYYYVDGDPHFIIQIPGKNDSICFNIDEKPGTVLRLIQDPVTGITVTGQIIGDKRSNASSRTGKTYFGKLGITNAWMDFRVEVTTEKIILGTGAELSTFSWLDTITVTQTGLSVTINRKKNMVVSFGDGISFVIILHQVWKKHPVHQDFLGFYVVDSHRMSAQTHGLLGQFFQPFDFKVFGIRPGSDPTKPDATMVVKNHRLTVTRGSQKDYRKDASVGTKVICWFVHNNGEGLIDGVHTDYIVPSLF.

The first 21 residues, 1-21, serve as a signal peptide directing secretion; that stretch reads MRTMWWPCLVLALLSGLETSG. The propeptide occupies 22–33; sequence FPRSPLQLLGKR. The VIT domain maps to 29–158; it reads LLGKRSLPEG…KVTFELTYEE (130 aa). N91 is a glycosylation site (N-linked (GlcNAc...) asparagine). The VWFA domain occupies 284–467; sequence NIVFVIDVSG…LQLQGFYEEV (184 aa). A glycan (N-linked (GlcNAc...) asparagine) is linked at N580. An Aspartate 1-(chondroitin 4-sulfate)-ester modification is found at D649. Residues 650–889 constitute a propeptide that is removed on maturation; that stretch reads PHFIIQIPGK…HTDYIVPSLF (240 aa).

Belongs to the ITIH family. I-alpha-I plasma protease inhibitors are assembled from one or two heavy chains (HC) and one light chain, bikunin. Pre-alpha-inhibitor (P-alpha-I) is composed of ITIH3/HC3 and bikunin. In terms of processing, heavy chains are linked to bikunin via chondroitin 4-sulfate esterified to the alpha-carboxyl of the C-terminal aspartate after propeptide cleavage. In terms of tissue distribution, expressed in both liver and brain.

Its subcellular location is the secreted. Functionally, may act as a carrier of hyaluronan in serum or as a binding protein between hyaluronan and other matrix protein, including those on cell surfaces in tissues to regulate the localization, synthesis and degradation of hyaluronan which are essential to cells undergoing biological processes. This Mus musculus (Mouse) protein is Inter-alpha-trypsin inhibitor heavy chain H3 (Itih3).